Reading from the N-terminus, the 40-residue chain is Photosystem II reaction center protein J (40 aa).

Residues 8-28 traverse the membrane as a helical segment; that stretch reads IPLWIIGTVAGILVIGLVGIF.

This sequence belongs to the PsbJ family. PSII is composed of 1 copy each of membrane proteins PsbA, PsbB, PsbC, PsbD, PsbE, PsbF, PsbH, PsbI, PsbJ, PsbK, PsbL, PsbM, PsbT, PsbX, PsbY, PsbZ, Psb30/Ycf12, at least 3 peripheral proteins of the oxygen-evolving complex and a large number of cofactors. It forms dimeric complexes.

The protein resides in the plastid. The protein localises to the chloroplast thylakoid membrane. Functionally, one of the components of the core complex of photosystem II (PSII). PSII is a light-driven water:plastoquinone oxidoreductase that uses light energy to abstract electrons from H(2)O, generating O(2) and a proton gradient subsequently used for ATP formation. It consists of a core antenna complex that captures photons, and an electron transfer chain that converts photonic excitation into a charge separation. In Spinacia oleracea (Spinach), this protein is Photosystem II reaction center protein J.